Here is a 1014-residue protein sequence, read N- to C-terminus: Chondroitin sulfate ABC exolyase (1014 aa).

Residues 1–14 form the signal peptide; the sequence is MLILSFLCPAFLNA. Positions 24, 26, 50, 53, and 161 each coordinate Ca(2+). Active-site proton acceptor residues include His345 and His454. The active-site Proton donor is the Tyr461.

This sequence belongs to the polysaccharide lyase 8 family. As to quaternary structure, monomer. Ca(2+) serves as cofactor. The cofactor is Mg(2+).

The protein resides in the periplasm. The enzyme catalyses Exolytic removal of Delta(4)-unsaturated disaccharide residues from the non-reducing ends of both polymeric chondroitin/dermatan sulfates and their oligosaccharide fragments.. Its activity is regulated as follows. Specific activity for chondroitin sulfate substrates increases moderately (2-fold) while an increase of 25-fold is observed for dermatan sulfate as substrate upon addition of Ca(2+) or Mg(2+) ions. Increasing the concentration of Na(+), K(+) or Cs(+) chloride from 0 to 0.1 M, increases the activity against all substrates. Further increases in salt concentration reduces the activity dramatically, with 50% inhibition occurring at 0.15 M and nearly complete inhibition at 0.4 M salt. The addition of 10 mM Ca(2+) or Mg(2+) ions increases the activity against chondroitin 4- and 6-sulfates by 2-3-fold, while the activity against dermatan sulfate increases much more significantly by 50-fold. Addition of Mn(2+) and Zn(2+) reduces activity against chondroitin sulfate substrates, but increases the activity against dermatan sulfate. Increasing the concentration of CaCl(2) with both chondroitin 4- and 6-sulfates from 0 to 0.04 M increases the activity. A further increase reduces activity, with 50% inhibition at 0.065-0.085 M and a complete inhibition of the reaction at 0.2 M. In case of dermatan sulfate, the addition of low concentration of CaCl(2) dramatically increases the activity from the basal level. The maximal activity is reached at 0.01 M CaCl(2). Its function is as follows. Broad-specificity glycosaminoglycan lyase, which acts in an exolytic fashion degrading chondroitin sulfates and dermatan sulfate to yield only disaccharide products. Has a preference for chondroitin 4-sulfate over chondroitin 6-sulfate. Has extremely low activity against hyaluronic acid. Is not active against acharan sulfate, heparin or heparan sulfate. The sequence is that of Chondroitin sulfate ABC exolyase (chonabc) from Bacteroides thetaiotaomicron.